The sequence spans 417 residues: Sulfate adenylyltransferase (417 aa).

Polar residues predominate over residues M1 to P10. The tract at residues M1–P20 is disordered.

This sequence belongs to the sulfate adenylyltransferase family.

The enzyme catalyses sulfate + ATP + H(+) = adenosine 5'-phosphosulfate + diphosphate. It participates in sulfur metabolism; hydrogen sulfide biosynthesis; sulfite from sulfate: step 1/3. The polypeptide is Sulfate adenylyltransferase (Psychrobacter arcticus (strain DSM 17307 / VKM B-2377 / 273-4)).